The chain runs to 129 residues: Cytochrome c oxidase subunit 5B, mitochondrial (129 aa).

The transit peptide at 1–31 (MASRLLRGVGALASQALRARGPNGVSVVRSM) directs the protein to the mitochondrion. Residues lysine 68 and lysine 86 each carry the N6-acetyllysine modification. Residues cysteine 91, cysteine 93, cysteine 113, and cysteine 116 each coordinate Zn(2+). The residue at position 121 (lysine 121) is an N6-acetyllysine.

It belongs to the cytochrome c oxidase subunit 5B family. Component of the cytochrome c oxidase (complex IV, CIV), a multisubunit enzyme composed of 14 subunits. The complex is composed of a catalytic core of 3 subunits MT-CO1, MT-CO2 and MT-CO3, encoded in the mitochondrial DNA, and 11 supernumerary subunits COX4I1 (or COX4I2), COX5A, COX5B, COX6A2 (or COX6A1), COX6B1 (or COX6B2), COX6C, COX7A1 (or COX7A2), COX7B, COX7C, COX8B and NDUFA4, which are encoded in the nuclear genome. The complex exists as a monomer or a dimer and forms supercomplexes (SCs) in the inner mitochondrial membrane with NADH-ubiquinone oxidoreductase (complex I, CI) and ubiquinol-cytochrome c oxidoreductase (cytochrome b-c1 complex, complex III, CIII), resulting in different assemblies (supercomplex SCI(1)III(2)IV(1) and megacomplex MCI(2)III(2)IV(2)).

The protein resides in the mitochondrion inner membrane. Its pathway is energy metabolism; oxidative phosphorylation. Component of the cytochrome c oxidase, the last enzyme in the mitochondrial electron transport chain which drives oxidative phosphorylation. The respiratory chain contains 3 multisubunit complexes succinate dehydrogenase (complex II, CII), ubiquinol-cytochrome c oxidoreductase (cytochrome b-c1 complex, complex III, CIII) and cytochrome c oxidase (complex IV, CIV), that cooperate to transfer electrons derived from NADH and succinate to molecular oxygen, creating an electrochemical gradient over the inner membrane that drives transmembrane transport and the ATP synthase. Cytochrome c oxidase is the component of the respiratory chain that catalyzes the reduction of oxygen to water. Electrons originating from reduced cytochrome c in the intermembrane space (IMS) are transferred via the dinuclear copper A center (CU(A)) of subunit 2 and heme A of subunit 1 to the active site in subunit 1, a binuclear center (BNC) formed by heme A3 and copper B (CU(B)). The BNC reduces molecular oxygen to 2 water molecules using 4 electrons from cytochrome c in the IMS and 4 protons from the mitochondrial matrix. This Bos taurus (Bovine) protein is Cytochrome c oxidase subunit 5B, mitochondrial (COX5B).